We begin with the raw amino-acid sequence, 441 residues long: GTPase Der (441 aa).

EngA-type G domains are found at residues 4 to 168 (PVVA…PEDI) and 177 to 352 (IRIA…EQNS). Residues 10 to 17 (GRPNVGKS), 57 to 61 (DTGGI), 121 to 124 (NKVE), 183 to 190 (GRPNVGKS), 230 to 234 (DTAGM), and 295 to 298 (NKWD) each bind GTP. A KH-like domain is found at 353-437 (TRVATATLNT…PIRMIVRQKD (85 aa)).

Belongs to the TRAFAC class TrmE-Era-EngA-EngB-Septin-like GTPase superfamily. EngA (Der) GTPase family. As to quaternary structure, associates with the 50S ribosomal subunit.

Its function is as follows. GTPase that plays an essential role in the late steps of ribosome biogenesis. This Desulfitobacterium hafniense (strain Y51) protein is GTPase Der.